A 398-amino-acid polypeptide reads, in one-letter code: Nicotinate phosphoribosyltransferase (398 aa).

His214 carries the phosphohistidine; by autocatalysis modification.

It belongs to the NAPRTase family. Post-translationally, transiently phosphorylated on a His residue during the reaction cycle. Phosphorylation strongly increases the affinity for substrates and increases the rate of nicotinate D-ribonucleotide production. Dephosphorylation regenerates the low-affinity form of the enzyme, leading to product release.

The catalysed reaction is nicotinate + 5-phospho-alpha-D-ribose 1-diphosphate + ATP + H2O = nicotinate beta-D-ribonucleotide + ADP + phosphate + diphosphate. The protein operates within cofactor biosynthesis; NAD(+) biosynthesis; nicotinate D-ribonucleotide from nicotinate: step 1/1. Catalyzes the synthesis of beta-nicotinate D-ribonucleotide from nicotinate and 5-phospho-D-ribose 1-phosphate at the expense of ATP. This chain is Nicotinate phosphoribosyltransferase, found in Xanthomonas campestris pv. campestris (strain 8004).